A 485-amino-acid chain; its full sequence is Predicted GPI-anchored protein 27 (485 aa).

Positions 1–20 (MHFTSSLLATLIWFTLPVQS) are cleaved as a signal peptide. Residues N30, N86, N96, and N444 are each glycosylated (N-linked (GlcNAc...) asparagine). G467 carries GPI-anchor amidated glycine lipidation. Residues 468–485 (LVLVSSGVLLGTCLLFIL) constitute a propeptide, removed in mature form.

It localises to the cell membrane. The chain is Predicted GPI-anchored protein 27 (PGA27) from Candida albicans (strain SC5314 / ATCC MYA-2876) (Yeast).